A 59-amino-acid chain; its full sequence is MKILSIVLIALIICSISICTEAFGLIDVKCSASRECWVACKKVTGSGQGKCQNNQCRCY.

Residues 1–22 form the signal peptide; the sequence is MKILSIVLIALIICSISICTEA. Intrachain disulfides connect cysteine 30–cysteine 51, cysteine 36–cysteine 56, and cysteine 40–cysteine 58.

This sequence belongs to the short scorpion toxin superfamily. Potassium channel inhibitor family. Alpha-KTx 16 subfamily. As to expression, expressed by the venom gland.

It localises to the secreted. Weak inhibitor of voltage-gated potassium channel hKv1.3/KCNA3. The polypeptide is Potassium channel toxin alpha-KTx 16.4 (Mesobuthus eupeus (Lesser Asian scorpion)).